The chain runs to 215 residues: MAVKLNATKREDLTKSATKQIRLSGRVPAVVYGKAKDPKNVSVDSVDLVKTVRDEGRNAIISLQVENSSVDVMLHDYQIDPIKDELLHADFYVVNMSEEMDVNVAVRLDGETKGEKEGGVLQQPFYEILVRAKPNNIPEEIVIDVSDLDVGDSVSVADIKVDGNYEILEDPDTSVASVTPPTTEEDLDTDDVDENAEPELVGAENDSADEESENK.

Positions 170–215 are disordered; the sequence is DPDTSVASVTPPTTEEDLDTDDVDENAEPELVGAENDSADEESENK. 2 stretches are compositionally biased toward acidic residues: residues 183 to 197 and 206 to 215; these read TEEDLDTDDVDENAE and DSADEESENK.

It belongs to the bacterial ribosomal protein bL25 family. CTC subfamily. Part of the 50S ribosomal subunit; part of the 5S rRNA/L5/L18/L25 subcomplex. Contacts the 5S rRNA. Binds to the 5S rRNA independently of L5 and L18.

This is one of the proteins that binds to the 5S RNA in the ribosome where it forms part of the central protuberance. The chain is Large ribosomal subunit protein bL25 from Oceanobacillus iheyensis (strain DSM 14371 / CIP 107618 / JCM 11309 / KCTC 3954 / HTE831).